The chain runs to 181 residues: Inner membrane-spanning protein YciB (181 aa).

Transmembrane regions (helical) follow at residues 10-30 (LVIF…GALI), 50-70 (MHLI…ILHD), 72-92 (SFIK…LGVS), 118-138 (VTWY…YVAF), and 148-168 (FKVF…VVYL).

The protein belongs to the YciB family.

It is found in the cell inner membrane. Functionally, plays a role in cell envelope biogenesis, maintenance of cell envelope integrity and membrane homeostasis. This chain is Inner membrane-spanning protein YciB, found in Shewanella pealeana (strain ATCC 700345 / ANG-SQ1).